The primary structure comprises 549 residues: Cobalt-dependent inorganic pyrophosphatase (549 aa).

CBS domains follow at residues 74-130 (EMDK…IWDS) and 252-310 (MTKD…VIQV). AMP-binding positions include K100, 116-119 (STSN), T253, V258, and 278-280 (YSN).

Belongs to the PPase family. Homodimer. Co(2+) is required as a cofactor. Mn(2+) serves as cofactor. It depends on Mg(2+) as a cofactor.

The enzyme catalyses diphosphate + H2O = 2 phosphate + H(+). Its activity is regulated as follows. Inhibited by AMP and ADP with 25% and 35% of activity remaining, respectively, at saturating conditions. Activated 5-fold by diadenosine polyphosphates(Ap[n]A) with n&gt;2 (Ap3A, Ap4A, Ap5A, Ap6A) at saturating conditions. The polypeptide is Cobalt-dependent inorganic pyrophosphatase (Clostridium perfringens (strain 13 / Type A)).